The sequence spans 81 residues: Putative membrane protein insertion efficiency factor (81 aa).

This sequence belongs to the UPF0161 family.

Its subcellular location is the cell inner membrane. Could be involved in insertion of integral membrane proteins into the membrane. This is Putative membrane protein insertion efficiency factor from Thermotoga maritima (strain ATCC 43589 / DSM 3109 / JCM 10099 / NBRC 100826 / MSB8).